Here is a 362-residue protein sequence, read N- to C-terminus: Beta-ketoacyl-[acyl-carrier-protein] synthase III 2 (362 aa).

Residues C113 and H251 contribute to the active site. An ACP-binding region spans residues Q252–R256. Residue N281 is part of the active site.

This sequence belongs to the thiolase-like superfamily. FabH family. In terms of assembly, homodimer.

Its subcellular location is the cytoplasm. The catalysed reaction is malonyl-[ACP] + acetyl-CoA + H(+) = 3-oxobutanoyl-[ACP] + CO2 + CoA. It functions in the pathway lipid metabolism; fatty acid biosynthesis. Catalyzes the condensation reaction of fatty acid synthesis by the addition to an acyl acceptor of two carbons from malonyl-ACP. Catalyzes the first condensation reaction which initiates fatty acid synthesis and may therefore play a role in governing the total rate of fatty acid production. Possesses both acetoacetyl-ACP synthase and acetyl transacylase activities. Its substrate specificity determines the biosynthesis of branched-chain and/or straight-chain of fatty acids. The chain is Beta-ketoacyl-[acyl-carrier-protein] synthase III 2 from Vibrio vulnificus (strain YJ016).